The sequence spans 240 residues: Adenylate dimethylallyltransferase (240 aa).

It belongs to the isopentenyl transferase family.

It catalyses the reaction dimethylallyl diphosphate + AMP = N(6)-(dimethylallyl)adenosine 5'-phosphate + diphosphate. In terms of biological role, transfers dimethylallyl groups to AMP as part of the biosynthesis of cytokinin phytohormones. The polypeptide is Adenylate dimethylallyltransferase (ipt) (Agrobacterium vitis (Rhizobium vitis)).